The following is a 759-amino-acid chain: Forkhead box protein M1 (759 aa).

2 disordered regions span residues 1-54 and 94-165; these read MRTS…AESS and KGKE…QRQE. Residues 36 to 54 are compositionally biased toward polar residues; the sequence is PGQQEPTQAQASQDVAESS. The segment covering 141–151 has biased composition (low complexity); sequence LGPKPGAKGVP. Glycyl lysine isopeptide (Lys-Gly) (interchain with G-Cter in SUMO2) cross-links involve residues lysine 200 and lysine 324. Positions 234–326 form a DNA-binding region, fork-head; the sequence is ERPPYSYMAM…LTLDQVFKPL (93 aa). A disordered region spans residues 328 to 349; it reads PGSPQSPEHLESQQKRPNPELR. Serine 330 carries the post-translational modification Phosphoserine. A compositionally biased stretch (basic and acidic residues) spans 335-349; that stretch reads EHLESQQKRPNPELR. Lysine 355 participates in a covalent cross-link: Glycyl lysine isopeptide (Lys-Gly) (interchain with G-Cter in SUMO2). Serine 375 is modified (phosphoserine; by CHEK2). Residues lysine 421 and lysine 439 each participate in a glycyl lysine isopeptide (Lys-Gly) (interchain with G-Cter in SUMO2) cross-link. Serine 521 carries the post-translational modification Phosphoserine. Disordered regions lie at residues 530-556, 572-643, and 681-706; these read LVTKRREKREVSRSRRKQHLQPPCLDE, MEIL…PQGA, and LASDPFSSSPPPHLEAKPGSPELQVP. Over residues 531 to 542 the composition is skewed to basic and acidic residues; it reads VTKRREKREVSR. A compositionally biased stretch (polar residues) spans 604 to 613; sequence PVSSTPSKSV. Threonine 608 is modified (phosphothreonine; by CDK1). At threonine 624 the chain carries Phosphothreonine. Residues serine 726 and serine 735 each carry the phosphoserine; by PLK1 modification.

In terms of processing, phosphorylated in M (mitotic) phase. Phosphorylation by the checkpoint kinase CHEK2 in response to DNA damage increases the FOXM1 protein stability probably stimulating the transcription of genes involved in DNA repair. Phosphorylated by CDK1 in late S and G2 phases, creating docking sites for the POLO box domains of PLK1. Subsequently, PLK1 binds and phosphorylates FOXM1, leading to activation of transcriptional activity and subsequent enhanced expression of key mitotic regulators. Phosphorylated by GSK3B leading to ubiquitination and proteasomal degradation. As to expression, highly expressed in thymus and testis, but weakly in intestine and lung. Appears to be expressed only in adult organs containing proliferating/cycling cells or in response to growth factors.

The protein resides in the nucleus. In terms of biological role, transcription factor regulating the expression of cell cycle genes essential for DNA replication and mitosis. Plays a role in the control of cell proliferation. Also plays a role in DNA break repair, participating in the DNA damage checkpoint response. Promotes transcription of PHB2. The polypeptide is Forkhead box protein M1 (Foxm1) (Rattus norvegicus (Rat)).